The following is a 156-amino-acid chain: Transcriptional repressor NrdR (156 aa).

A zinc finger spans residues 3-34 (CPFCHSDNDKVQDSRTAEAGYVVRRKRLCQTC). Residues 49–139 (VRVVKSDETR…VYRDFDDAKD (91 aa)) enclose the ATP-cone domain.

Belongs to the NrdR family. It depends on Zn(2+) as a cofactor.

In terms of biological role, negatively regulates transcription of bacterial ribonucleotide reductase nrd genes and operons by binding to NrdR-boxes. This is Transcriptional repressor NrdR from Rhodopirellula baltica (strain DSM 10527 / NCIMB 13988 / SH1).